The sequence spans 451 residues: Protein tweety homolog 1-B (451 aa).

Topologically, residues 1-43 (MSTSHGYRASWWTYILHQVPHTNFQFEVVDNQFAPQEWSYQQA) are extracellular. The helical transmembrane segment at 44–64 (LLFLASIAGLCLAISLVLICV) threads the bilayer. The Cytoplasmic segment spans residues 65-86 (YLIKFCCCASQEDDDSKSHRVC). A helical transmembrane segment spans residues 87-107 (CVTWSCVAAVIICCAGIGIGF). Residues 108 to 214 (YGNSETNDGV…QVNFIEDYRW (107 aa)) lie on the Extracellular side of the membrane. An N-linked (GlcNAc...) asparagine glycan is attached at Asn-128. A helical transmembrane segment spans residues 215–235 (LAYILLLLLDLIICLFTLLSL). Over 236–240 (AKQIK) the chain is Cytoplasmic. Residues 241–261 (WLVIVMTVVSFFVLLLSWGSM) traverse the membrane as a helical segment. The Extracellular portion of the chain corresponds to 262 to 390 (GLEMATAVGL…LKGLCYDGME (129 aa)). Cystine bridges form between Cys-275-Cys-385 and Cys-303-Cys-370. 2 N-linked (GlcNAc...) asparagine glycosylation sites follow: Asn-284 and Asn-355. A helical transmembrane segment spans residues 391-411 (GILFLLLFSFLSALSFTAAVC). The Cytoplasmic segment spans residues 412–451 (SLPRAWKRFRNRDLDYDDMDEDDPFNPQESKRFVQWQSSI).

This sequence belongs to the tweety family. As to quaternary structure, homotetramer; disulfide-linked. Homodimer.

The protein resides in the cell membrane. It carries out the reaction chloride(in) = chloride(out). The catalysed reaction is L-glutamate(out) = L-glutamate(in). Its function is as follows. May act as a calcium-independent, swelling-dependent volume-regulated anion channel (VRAC-swell) which plays a pivotal role in the process of regulatory volume decrease (RVD) in the brain through the efflux of anions like chloride and organic osmolytes like glutamate. This is Protein tweety homolog 1-B (ttyh1-b) from Xenopus laevis (African clawed frog).